A 110-amino-acid polypeptide reads, in one-letter code: MLSLAKIAALFVLTAVAEIVGCYLPWLVLKAGKPAWLLAPAALSLALFAWLLTLHPAAAARTYAAYGGVYIAVALAWLRIVDGVPLSRWDVAGAALALAGMSVIALQPRG.

4 helical membrane passes run 9–29, 34–54, 64–84, and 86–106; these read ALFV…WLVL, PAWL…LLTL, AAYG…VDGV, and LSRW…VIAL.

It belongs to the UPF0060 family.

It is found in the cell inner membrane. This Burkholderia pseudomallei (strain K96243) protein is UPF0060 membrane protein BPSL1340.